A 397-amino-acid polypeptide reads, in one-letter code: Lymphoid enhancer-binding factor 1 (397 aa).

A CTNNB1-binding region spans residues M1–E60. Residue K25 forms a Glycyl lysine isopeptide (Lys-Gly) (interchain with G-Cter in SUMO) linkage. A disordered region spans residues E38 to K102. The span at P80–D96 shows a compositional bias: basic and acidic residues. S130 is modified (phosphoserine). T153 bears the Phosphothreonine; by NLK mark. At S164 the chain carries Phosphoserine; by NLK. Disordered regions lie at residues S164–E190 and V266–H296. A Glycyl lysine isopeptide (Lys-Gly) (interchain with G-Cter in SUMO) cross-link involves residue K267. Over residues K267–R294 the composition is skewed to basic and acidic residues. A DNA-binding region (HMG box) is located at residues I297–S365. The segment at R367–I397 is disordered.

This sequence belongs to the TCF/LEF family. Binds the armadillo repeat of CTNNB1 and forms a stable complex. Interacts with TLE1, PIASG, ALYREF/THOC4, EP300, MDFI and MDFIC. Interacts with DAZAP2. In terms of processing, phosphorylated at Thr-153 and/or Ser-164 by NLK. Phosphorylation by NLK at these sites represses LEF1-mediated transcriptional activation of target genes of the canonical Wnt signaling pathway.

Its subcellular location is the nucleus. Its function is as follows. Transcription factor that binds DNA in a sequence-specific manner. Participates in the Wnt signaling pathway. Activates transcription of target genes in the presence of CTNNB1 and EP300. PIASG antagonizes both Wnt-dependent and Wnt-independent activation by LEF1. TLE1, TLE2, TLE3 and TLE4 repress transactivation mediated by LEF1 and CTNNB1. Regulates T-cell receptor alpha enhancer function. Required for IL17A expressing gamma-delta T-cell maturation and development, via binding to regulator loci of BLK to modulate expression. Acts as a positive regulator of odontoblast differentiation during mesenchymal tooth germ formation, expression is repressed during the bell stage by MSX1-mediated inhibition of CTNNB1 signaling. May play a role in hair cell differentiation and follicle morphogenesis. This is Lymphoid enhancer-binding factor 1 from Rattus norvegicus (Rat).